A 419-amino-acid chain; its full sequence is ATP phosphoribosyltransferase regulatory subunit (419 aa).

The protein belongs to the class-II aminoacyl-tRNA synthetase family. HisZ subfamily. Heteromultimer composed of HisG and HisZ subunits.

The protein localises to the cytoplasm. It participates in amino-acid biosynthesis; L-histidine biosynthesis; L-histidine from 5-phospho-alpha-D-ribose 1-diphosphate: step 1/9. Its function is as follows. Required for the first step of histidine biosynthesis. May allow the feedback regulation of ATP phosphoribosyltransferase activity by histidine. The polypeptide is ATP phosphoribosyltransferase regulatory subunit (Ruminiclostridium cellulolyticum (strain ATCC 35319 / DSM 5812 / JCM 6584 / H10) (Clostridium cellulolyticum)).